The sequence spans 229 residues: Octanoyltransferase (229 aa).

A BPL/LPL catalytic domain is found at 45-220 (ATAVDELWVV…ELARQFCFVL (176 aa)). Residues 84–91 (RGGQVTYH), 151–153 (ALG), and 164–166 (GVA) each bind substrate. The active-site Acyl-thioester intermediate is the cysteine 182.

This sequence belongs to the LipB family.

It is found in the cytoplasm. The catalysed reaction is octanoyl-[ACP] + L-lysyl-[protein] = N(6)-octanoyl-L-lysyl-[protein] + holo-[ACP] + H(+). It participates in protein modification; protein lipoylation via endogenous pathway; protein N(6)-(lipoyl)lysine from octanoyl-[acyl-carrier-protein]: step 1/2. In terms of biological role, catalyzes the transfer of endogenously produced octanoic acid from octanoyl-acyl-carrier-protein onto the lipoyl domains of lipoate-dependent enzymes. Lipoyl-ACP can also act as a substrate although octanoyl-ACP is likely to be the physiological substrate. This Xylella fastidiosa (strain 9a5c) protein is Octanoyltransferase.